The following is a 102-amino-acid chain: Small ubiquitin-related modifier 1 (102 aa).

The Ubiquitin-like domain occupies 21 to 98; sequence DYIKLKVIGQ…IEVYQEQTGG (78 aa). Residue glycine 98 forms a Glycyl lysine isopeptide (Gly-Lys) (interchain with K-? in acceptor proteins) linkage. Positions 99–102 are excised as a propeptide; the sequence is HSTI.

It belongs to the ubiquitin family. SUMO subfamily. In terms of assembly, interacts with sae2, ube2i, ranbp2, pias1 and pias2. Interacts with sox9 and sox10. Covalently attached to a number of proteins. Cleavage of precursor form by a sentrin-specific protease is necessary for function.

Its subcellular location is the nucleus membrane. The protein resides in the nucleus speckle. The protein localises to the cytoplasm. It is found in the nucleus. It localises to the PML body. Its subcellular location is the cell membrane. Functionally, ubiquitin-like protein that can be covalently attached to proteins as a monomer or a lysine-linked polymer. Covalent attachment via an isopeptide bond to its substrates requires prior activation by the E1 complex sae1-sae2 and linkage to the E2 enzyme ube2i. This post-translational modification on lysine residues of proteins plays a crucial role in a number of cellular processes such as nuclear transport, DNA replication and repair, mitosis and signal transduction. Polymeric sumo1 chains are also susceptible to polyubiquitination which functions as a signal for proteasomal degradation of modified proteins. The protein is Small ubiquitin-related modifier 1 (sumo1) of Xenopus tropicalis (Western clawed frog).